Here is a 140-residue protein sequence, read N- to C-terminus: Lymphocyte antigen 6 complex locus protein G5c (140 aa).

The N-terminal stretch at 1 to 41 (MRFMAGPAGSQNPGPMCFHSSLQALYTVLLIVLVMMSLVFG) is a signal peptide. Residues 60 to 140 (LRCYRCLLET…SQCCFLGFLQ (81 aa)) form the UPAR/Ly6 domain. Disulfide bonds link C62-C89, C65-C74, C81-C107, and C116-C133. Residue N96 is glycosylated (N-linked (GlcNAc...) asparagine).

As to quaternary structure, forms oligomers. In terms of processing, N-glycosylated.

The protein resides in the secreted. Functionally, may have a role in hematopoietic cell differentiation. This Macaca mulatta (Rhesus macaque) protein is Lymphocyte antigen 6 complex locus protein G5c (LY6G5C).